The primary structure comprises 244 residues: Tubulin-folding cofactor B (244 aa).

M1 carries the post-translational modification N-acetylmethionine. A Phosphoserine; by PAK1 modification is found at S65. Y98 is modified (phosphotyrosine). S110 carries the phosphoserine modification. S128 carries the post-translational modification Phosphoserine; by PAK1. The CAP-Gly domain maps to 183-225 (GLTDFKPGYWVGVRYDEPLGKNDGSVNGKRYFECQAKYGAFVK). K219 carries the post-translational modification N6-acetyllysine.

This sequence belongs to the TBCB family. Supercomplex made of cofactors A to E. Cofactors A and D function by capturing and stabilizing tubulin in a quasi-native conformation. Cofactor E binds to the cofactor D-tubulin complex; interaction with cofactor C then causes the release of tubulin polypeptides that are committed to the native state. Cofactors B and E can form a heterodimer which binds to alpha-tubulin and enhances their ability to dissociate tubulin heterodimers. Interacts with GAN. Interacts with DCTN1. Phosphorylation by PAK1 is required for normal function. In terms of processing, ubiquitinated in the presence of GAN which targets it for degradation by the proteasome. Widely expressed with highest levels in brain. Broadly distributed throughout the neonate brain but restricted mainly to ependymary cells in the adult brain where it is concentrated in the cilia.

The protein localises to the cytoplasm. It localises to the cytoskeleton. Binds to alpha-tubulin folding intermediates after their interaction with cytosolic chaperonin in the pathway leading from newly synthesized tubulin to properly folded heterodimer. Involved in regulation of tubulin heterodimer dissociation. May function as a negative regulator of axonal growth. The sequence is that of Tubulin-folding cofactor B (Tbcb) from Mus musculus (Mouse).